We begin with the raw amino-acid sequence, 428 residues long: Phosphoglucosamine mutase (428 aa).

Residue S96 is the Phosphoserine intermediate of the active site. Residues S96, D229, D231, and D233 each contribute to the Mg(2+) site. S96 bears the Phosphoserine mark.

This sequence belongs to the phosphohexose mutase family. It depends on Mg(2+) as a cofactor. Post-translationally, activated by phosphorylation.

The catalysed reaction is alpha-D-glucosamine 1-phosphate = D-glucosamine 6-phosphate. In terms of biological role, catalyzes the conversion of glucosamine-6-phosphate to glucosamine-1-phosphate. In Thermotoga neapolitana (strain ATCC 49049 / DSM 4359 / NBRC 107923 / NS-E), this protein is Phosphoglucosamine mutase.